The primary structure comprises 796 residues: Phenylalanine--tRNA ligase beta subunit (796 aa).

Positions Ser-39–Ala-149 constitute a tRNA-binding domain. Positions Leu-398–Ser-470 constitute a B5 domain. Positions 448, 454, 457, and 458 each coordinate Mg(2+). The 93-residue stretch at Pro-703–Arg-795 folds into the FDX-ACB domain.

This sequence belongs to the phenylalanyl-tRNA synthetase beta subunit family. Type 1 subfamily. Tetramer of two alpha and two beta subunits. Requires Mg(2+) as cofactor.

The protein localises to the cytoplasm. The catalysed reaction is tRNA(Phe) + L-phenylalanine + ATP = L-phenylalanyl-tRNA(Phe) + AMP + diphosphate + H(+). In Novosphingobium aromaticivorans (strain ATCC 700278 / DSM 12444 / CCUG 56034 / CIP 105152 / NBRC 16084 / F199), this protein is Phenylalanine--tRNA ligase beta subunit.